The chain runs to 434 residues: MSFNTIIDWNSCTAEQQRQLLMRPAISASESITRTVNDILDNVKARGDDALREYSAKFDKTTVNALKVSAEEIAAASERLSDELKQAMAVAVKNIETFHTAQKLPPVDVETQPGVRCQQVTRPVASVGLYIPGGSAPLFSTVLMLATPARIAGCKKVVLCSPPPIADEILYAAQLCGVKDVFNVGGAQAIAALAFGTESVPKVDKIFGPGNAFVTEAKRQVSQRLDGAAIDMPAGPSEVLVIADSGATPDFVASDLLSQAEHGPDSQVILLTPDADMAHQVAEAVERQLAELPRAETARQALNASRLIVTKDLAQCVEISNQYGPEHLIIQTRNARDLVDGITSAGSVFLGDWSPESAGDYASGTNHVLPTYGYTATCSSLGLADFQKRMTVQELSKEGFSALASTIETLAAAERLTAHKNAVTLRVNALKEQA.

Y130, Q188, and N211 together coordinate NAD(+). The substrate site is built by S237, Q259, and H262. Zn(2+) contacts are provided by Q259 and H262. Active-site proton acceptor residues include E326 and H327. Substrate is bound by residues H327, D360, E414, and H419. D360 lines the Zn(2+) pocket. H419 serves as a coordination point for Zn(2+).

It belongs to the histidinol dehydrogenase family. As to quaternary structure, homodimer. Zn(2+) is required as a cofactor.

It carries out the reaction L-histidinol + 2 NAD(+) + H2O = L-histidine + 2 NADH + 3 H(+). It functions in the pathway amino-acid biosynthesis; L-histidine biosynthesis; L-histidine from 5-phospho-alpha-D-ribose 1-diphosphate: step 9/9. In terms of biological role, catalyzes the sequential NAD-dependent oxidations of L-histidinol to L-histidinaldehyde and then to L-histidine. This Shigella sonnei (strain Ss046) protein is Histidinol dehydrogenase.